A 660-amino-acid chain; its full sequence is Bifunctional polymyxin resistance protein ArnA (660 aa).

The formyltransferase ArnAFT stretch occupies residues 1–304; the sequence is MKAVIFAYHD…TLGLVAGARL (304 aa). H104 (proton donor; for formyltransferase activity) is an active-site residue. (6R)-10-formyltetrahydrofolate-binding positions include R114 and 136 to 140; that span reads VKRAD. The tract at residues 314–660 is dehydrogenase ArnADH; that stretch reads RRIRVLILGV…RSVDVAERAS (347 aa). Residues D347 and 368-369 each bind NAD(+); that span reads DI. UDP-alpha-D-glucuronate is bound by residues A393, Y398, and 432 to 433; that span reads TS. E434 acts as the Proton acceptor; for decarboxylase activity in catalysis. Residues R460, N492, 526–535, and Y613 each bind UDP-alpha-D-glucuronate; that span reads KLIDGGQQKR. The active-site Proton donor; for decarboxylase activity is the R619.

This sequence in the N-terminal section; belongs to the Fmt family. UDP-L-Ara4N formyltransferase subfamily. It in the C-terminal section; belongs to the NAD(P)-dependent epimerase/dehydratase family. UDP-glucuronic acid decarboxylase subfamily. Homohexamer, formed by a dimer of trimers.

It catalyses the reaction UDP-alpha-D-glucuronate + NAD(+) = UDP-beta-L-threo-pentopyranos-4-ulose + CO2 + NADH. The enzyme catalyses UDP-4-amino-4-deoxy-beta-L-arabinose + (6R)-10-formyltetrahydrofolate = UDP-4-deoxy-4-formamido-beta-L-arabinose + (6S)-5,6,7,8-tetrahydrofolate + H(+). Its pathway is nucleotide-sugar biosynthesis; UDP-4-deoxy-4-formamido-beta-L-arabinose biosynthesis; UDP-4-deoxy-4-formamido-beta-L-arabinose from UDP-alpha-D-glucuronate: step 1/3. It functions in the pathway nucleotide-sugar biosynthesis; UDP-4-deoxy-4-formamido-beta-L-arabinose biosynthesis; UDP-4-deoxy-4-formamido-beta-L-arabinose from UDP-alpha-D-glucuronate: step 3/3. It participates in bacterial outer membrane biogenesis; lipopolysaccharide biosynthesis. Its function is as follows. Bifunctional enzyme that catalyzes the oxidative decarboxylation of UDP-glucuronic acid (UDP-GlcUA) to UDP-4-keto-arabinose (UDP-Ara4O) and the addition of a formyl group to UDP-4-amino-4-deoxy-L-arabinose (UDP-L-Ara4N) to form UDP-L-4-formamido-arabinose (UDP-L-Ara4FN). The modified arabinose is attached to lipid A and is required for resistance to polymyxin and cationic antimicrobial peptides. The chain is Bifunctional polymyxin resistance protein ArnA from Salmonella choleraesuis (strain SC-B67).